A 345-amino-acid chain; its full sequence is Protein RecA (345 aa).

65–72 (GPESSGKT) provides a ligand contact to ATP.

It belongs to the RecA family.

It is found in the cytoplasm. Functionally, can catalyze the hydrolysis of ATP in the presence of single-stranded DNA, the ATP-dependent uptake of single-stranded DNA by duplex DNA, and the ATP-dependent hybridization of homologous single-stranded DNAs. It interacts with LexA causing its activation and leading to its autocatalytic cleavage. The protein is Protein RecA of Hahella chejuensis (strain KCTC 2396).